Reading from the N-terminus, the 233-residue chain is Lipoprotein-releasing system ATP-binding protein LolD (233 aa).

An ABC transporter domain is found at leucine 6 to glutamate 233. An ATP-binding site is contributed by glycine 42–serine 49.

This sequence belongs to the ABC transporter superfamily. Lipoprotein translocase (TC 3.A.1.125) family. As to quaternary structure, the complex is composed of two ATP-binding proteins (LolD) and two transmembrane proteins (LolC and LolE).

It localises to the cell inner membrane. In terms of biological role, part of the ABC transporter complex LolCDE involved in the translocation of mature outer membrane-directed lipoproteins, from the inner membrane to the periplasmic chaperone, LolA. Responsible for the formation of the LolA-lipoprotein complex in an ATP-dependent manner. This Shigella boydii serotype 4 (strain Sb227) protein is Lipoprotein-releasing system ATP-binding protein LolD.